Reading from the N-terminus, the 564-residue chain is Arginine--tRNA ligase (564 aa).

A 'HIGH' region motif is present at residues 130–140; it reads ANPTGSLHIGH.

Belongs to the class-I aminoacyl-tRNA synthetase family. As to quaternary structure, monomer.

It localises to the cytoplasm. It catalyses the reaction tRNA(Arg) + L-arginine + ATP = L-arginyl-tRNA(Arg) + AMP + diphosphate. This Malacoplasma penetrans (strain HF-2) (Mycoplasma penetrans) protein is Arginine--tRNA ligase.